Here is a 363-residue protein sequence, read N- to C-terminus: Methyltransferase pynC (363 aa).

S-adenosyl-L-methionine contacts are provided by residues 199–200, aspartate 225, 254–255, arginine 270, and arginine 271; these read GG and SF.

Belongs to the class I-like SAM-binding methyltransferase superfamily. Cation-independent O-methyltransferase family.

The protein operates within secondary metabolite biosynthesis. Methyltransferase; part of the gene cluster that mediates the biosynthesis of pyranonigrins, a family of antioxidative compounds. The first step of pyranonigrins biosynthesis is performed by the hybrid PKS-NRPS synthetase that condenses 6 malonyl-CoA units to an acetyl starter unit, to form a 1,3,5-trioxotetradecane-6,8-dienyl-ACP. The enoyl reductase (ER) domain of pynA is likely to be functional during the first two rounds of polyketide chain extension, to generate the saturated C-C bonds of the alkyl side chain. PynA subsequently forms the amide bond between the acyl chain and L-serine. Although pynA has a terminal reductase domain, it appears to require the thioesterase pynI for the release of the straight-chain intermediate from pynA via the formation of a tetramic acid pyranonigrin J. The methyltransferase pynC then coverts pyranonigrin J to pyranonigrin I via N-methylation. The FAD-dependent monooxygenase pynG catalyzes an epoxidation-mediated cyclization to form the dihydro-gamma-pyrone moiety, followed by pynD-catalyzed oxidation of the alcohol to the ketone and enolization to yield the characteristic tetramic acid-fused gamma-pyrone core of pyranonigrin H. Pyranonigrin H is substrate of pynH for dehydration-mediated exo-methylene formation from the serine side chain to produce pyranonigrin E, before the oxidase pynE reduces the exo-methylene of pyranonigrin E into a pendant methyl to form pyranonigrin G. The FAD-linked oxidoreductase pynB performs the reverse reaction and converts pyranonigrin G back to pyranonigrin E. In Aspergillus niger (strain ATCC MYA-4892 / CBS 513.88 / FGSC A1513), this protein is Methyltransferase pynC.